A 40-amino-acid chain; its full sequence is Plasma membrane ATPase proteolipid 1 (40 aa).

Residues 1–2 constitute a propeptide that is removed on maturation; that stretch reads MT. A helical membrane pass occupies residues 3-26; that stretch reads LPGGVILVFILVGLACIAIIATII. Over 27 to 40 the chain is Cytoplasmic; that stretch reads YRKWQARQRGLQRF.

Monomer and homodimer. Associated with the 100 kDa subunit of the plasma membrane H(+)-ATPase.

It localises to the cell membrane. In Saccharomyces cerevisiae (strain ATCC 204508 / S288c) (Baker's yeast), this protein is Plasma membrane ATPase proteolipid 1 (PMP1).